Here is a 1087-residue protein sequence, read N- to C-terminus: Collagen alpha-2(I) chain (1087 aa).

The segment at 1 to 931 is disordered; sequence APDPGPGPMG…PGPAGGGYDV (931 aa). Composition is skewed to low complexity over residues 83–120, 150–159, and 166–187; these read EPGA…AAGP, EPGPNGAVGP, and PGNN…AGAP. Residues 189–199 are compositionally biased toward pro residues; that stretch reads FPGPRGGPGPQ. The segment covering 201 to 211 has biased composition (low complexity); that stretch reads PQGAAGQRGLA. Gly residues predominate over residues 218 to 227; sequence GVKGDGGPKG. Low complexity-rich tracts occupy residues 228–241, 278–321, 335–345, 360–384, and 396–408; these read EPGN…PGPQ, AAGP…AGPS, PRGQPGNLGFP, KGAT…TGAT, and QGAA…QGLP. The segment covering 409-418 has biased composition (gly residues); that stretch reads GPAGGAGEAG. The span at 443-453 shows a compositional bias: low complexity; sequence NPGAAGASGPQ. Positions 466-493 are enriched in gly residues; it reads GTDGGKGEPGAAGAAGGPGHQGPGGMPG. Positions 504–515 are enriched in basic and acidic residues; it reads KGEKGEAGHRGP. Low complexity-rich tracts occupy residues 560–602, 613–640, and 677–695; these read PAGA…TGAR, FPGA…PAGK, and PGPA…LGLQ. A compositionally biased stretch (gly residues) spans 708-717; it reads GSPGGAGAVG. Composition is skewed to low complexity over residues 718–740 and 776–788; these read EPGR…LGLP and PGSS…AGAP. Positions 792-812 are enriched in gly residues; it reads GPSGGAGRGNRGESGPGGAAG. A compositionally biased stretch (low complexity) spans 813–828; it reads AVGPAGARGAAGPSGP. The segment covering 829-843 has biased composition (basic and acidic residues); the sequence is RGEKGVAGEKGERGL. 2 stretches are compositionally biased toward low complexity: residues 849–868 and 897–909; these read LQGM…AGPN and APGA…YVGP. Positions 910 to 924 are enriched in pro residues; sequence AGPPGSPGLPGPPGP. The region spanning 929-1087 is the Fibrillar collagen NC1 domain; that stretch reads YDVSGYDEYR…GLDLGPVCFK (159 aa).

The protein belongs to the fibrillar collagen family.

Its subcellular location is the secreted. The protein localises to the extracellular space. It localises to the extracellular matrix. The protein is Collagen alpha-2(I) chain of Epinephelus costae (Goldblotch grouper).